Here is a 290-residue protein sequence, read N- to C-terminus: MLKDIFTKKKKYASVPSEQAKHDVPEGIMTKCPKCKKIMLTKELDKNLRVCMNCGHHFPMNAKQRIESLLDEDSFEEFNQGMISENPLGFPEYLEKIEKDREKTSLNEAVVTGKGTISGFPAVIAIMDSTFRMGSMGSVVGEKITLAIEKAKEEKVPFIIFTASGGARMQEGVLSLMQMAKTSSALKLFSEEQGLIISVMTHPTTGGVSASFASLGDYNFAEPGTLIGFAGRRIIEQTIGEKLPEDFQTAEFLLKHGQLDAVIHRNDMKDKLAFLLDMHQTGGEYEWLQD.

The region spanning 28–290 (IMTKCPKCKK…TGGEYEWLQD (263 aa)) is the CoA carboxyltransferase N-terminal domain. Residues Cys-32, Cys-35, Cys-51, and Cys-54 each coordinate Zn(2+). Residues 32–54 (CPKCKKIMLTKELDKNLRVCMNC) form a C4-type zinc finger.

This sequence belongs to the AccD/PCCB family. As to quaternary structure, acetyl-CoA carboxylase is a heterohexamer composed of biotin carboxyl carrier protein (AccB), biotin carboxylase (AccC) and two subunits each of ACCase subunit alpha (AccA) and ACCase subunit beta (AccD). It depends on Zn(2+) as a cofactor.

The protein resides in the cytoplasm. The enzyme catalyses N(6)-carboxybiotinyl-L-lysyl-[protein] + acetyl-CoA = N(6)-biotinyl-L-lysyl-[protein] + malonyl-CoA. It functions in the pathway lipid metabolism; malonyl-CoA biosynthesis; malonyl-CoA from acetyl-CoA: step 1/1. Functionally, component of the acetyl coenzyme A carboxylase (ACC) complex. Biotin carboxylase (BC) catalyzes the carboxylation of biotin on its carrier protein (BCCP) and then the CO(2) group is transferred by the transcarboxylase to acetyl-CoA to form malonyl-CoA. The sequence is that of Acetyl-coenzyme A carboxylase carboxyl transferase subunit beta from Bacillus velezensis (strain DSM 23117 / BGSC 10A6 / LMG 26770 / FZB42) (Bacillus amyloliquefaciens subsp. plantarum).